We begin with the raw amino-acid sequence, 113 residues long: Biotrophy-associated secreted protein 3 (113 aa).

A signal peptide spans 1–20; the sequence is MQFSTVSFAIFAILPAMVAA.

Its subcellular location is the secreted. Secreted effector involved in biotrophic colonization of plant cells. The polypeptide is Biotrophy-associated secreted protein 3 (Pyricularia oryzae (strain 70-15 / ATCC MYA-4617 / FGSC 8958) (Rice blast fungus)).